The sequence spans 381 residues: 1-deoxy-D-xylulose 5-phosphate reductoisomerase (381 aa).

Residues Thr11, Gly12, Ser13, Ile14, Asn37, and Asn121 each coordinate NADPH. A 1-deoxy-D-xylulose 5-phosphate-binding site is contributed by Lys122. Glu123 contributes to the NADPH binding site. Asp147 lines the Mn(2+) pocket. The 1-deoxy-D-xylulose 5-phosphate site is built by Ser148, Glu149, Ser173, and His196. Position 149 (Glu149) interacts with Mn(2+). NADPH is bound at residue Gly202. Residues Ser209, Asn214, Lys215, and Glu218 each coordinate 1-deoxy-D-xylulose 5-phosphate. Glu218 is a Mn(2+) binding site.

The protein belongs to the DXR family. Requires Mg(2+) as cofactor. It depends on Mn(2+) as a cofactor.

The enzyme catalyses 2-C-methyl-D-erythritol 4-phosphate + NADP(+) = 1-deoxy-D-xylulose 5-phosphate + NADPH + H(+). The protein operates within isoprenoid biosynthesis; isopentenyl diphosphate biosynthesis via DXP pathway; isopentenyl diphosphate from 1-deoxy-D-xylulose 5-phosphate: step 1/6. In terms of biological role, catalyzes the NADPH-dependent rearrangement and reduction of 1-deoxy-D-xylulose-5-phosphate (DXP) to 2-C-methyl-D-erythritol 4-phosphate (MEP). In Ruminiclostridium cellulolyticum (strain ATCC 35319 / DSM 5812 / JCM 6584 / H10) (Clostridium cellulolyticum), this protein is 1-deoxy-D-xylulose 5-phosphate reductoisomerase.